We begin with the raw amino-acid sequence, 353 residues long: Nicotinate-nucleotide--dimethylbenzimidazole phosphoribosyltransferase (353 aa).

The active-site Proton acceptor is E318.

Belongs to the CobT family.

The catalysed reaction is 5,6-dimethylbenzimidazole + nicotinate beta-D-ribonucleotide = alpha-ribazole 5'-phosphate + nicotinate + H(+). It participates in nucleoside biosynthesis; alpha-ribazole biosynthesis; alpha-ribazole from 5,6-dimethylbenzimidazole: step 1/2. Functionally, catalyzes the synthesis of alpha-ribazole-5'-phosphate from nicotinate mononucleotide (NAMN) and 5,6-dimethylbenzimidazole (DMB). This is Nicotinate-nucleotide--dimethylbenzimidazole phosphoribosyltransferase from Geobacter metallireducens (strain ATCC 53774 / DSM 7210 / GS-15).